A 221-amino-acid polypeptide reads, in one-letter code: ATP phosphoribosyltransferase (221 aa).

It belongs to the ATP phosphoribosyltransferase family. Short subfamily. As to quaternary structure, heteromultimer composed of HisG and HisZ subunits.

It is found in the cytoplasm. The catalysed reaction is 1-(5-phospho-beta-D-ribosyl)-ATP + diphosphate = 5-phospho-alpha-D-ribose 1-diphosphate + ATP. It functions in the pathway amino-acid biosynthesis; L-histidine biosynthesis; L-histidine from 5-phospho-alpha-D-ribose 1-diphosphate: step 1/9. Catalyzes the condensation of ATP and 5-phosphoribose 1-diphosphate to form N'-(5'-phosphoribosyl)-ATP (PR-ATP). Has a crucial role in the pathway because the rate of histidine biosynthesis seems to be controlled primarily by regulation of HisG enzymatic activity. The sequence is that of ATP phosphoribosyltransferase from Anaeromyxobacter dehalogenans (strain 2CP-C).